A 479-amino-acid polypeptide reads, in one-letter code: Catalase easC (479 aa).

Residues 1 to 13 show a composition bias toward polar residues; it reads MASQVSLTAQGSG. The interval 1-28 is disordered; the sequence is MASQVSLTAQGSGLSAPLNGPEHLTSTT. The active site involves histidine 53. Tyrosine 343 is a heme binding site. Residues 365-385 form a disordered region; it reads HAANDAPKTKKPAVPLQKQSR.

This sequence belongs to the catalase family. Heme serves as cofactor.

It participates in alkaloid biosynthesis; ergot alkaloid biosynthesis. Functionally, catalase; part of the gene cluster that mediates the biosynthesis of fungal ergot alkaloid. DmaW catalyzes the first step of ergot alkaloid biosynthesis by condensing dimethylallyl diphosphate (DMAP) and tryptophan to form 4-dimethylallyl-L-tryptophan. The second step is catalyzed by the methyltransferase easF that methylates 4-dimethylallyl-L-tryptophan in the presence of S-adenosyl-L-methionine, resulting in the formation of 4-dimethylallyl-L-abrine. The catalase easC and the FAD-dependent oxidoreductase easE then transform 4-dimethylallyl-L-abrine to chanoclavine-I which is further oxidized by easD in the presence of NAD(+), resulting in the formation of chanoclavine-I aldehyde. Agroclavine dehydrogenase easG then mediates the conversion of chanoclavine-I aldehyde to agroclavine via a non-enzymatic adduct reaction: the substrate is an iminium intermediate that is formed spontaneously from chanoclavine-I aldehyde in the presence of glutathione. Further conversion of agroclavine to paspalic acid is a two-step process involving oxidation of agroclavine to elymoclavine and of elymoclavine to paspalic acid, the second step being performed by the elymoclavine oxidase cloA. However, cloA does not encode a functional enzyme indicating that C.fusiformis terminates its ergot alkaloid pathway at elymoclavine. The protein is Catalase easC of Claviceps fusiformis (Ergot fungus).